Here is a 441-residue protein sequence, read N- to C-terminus: MKHYPHYLDLKPAMHAKGVVRLPGSKSISNRTLLLAALAQGTTHIRDLLASDDTHVMLMALQKLGVKWEQIGESQDYIVHGVDGSFPVHQADLFMGNAGTAIRPLTAALAVTGGDYTLHGVSRMHERPIGDLVDALNAIGTHIEYTGEPGYPPLHIQRGRIHAHEMSVRGNVSSQFLTALLMAAPLMTREQDVIINVIGDLISKPYIEITLNLIQRFGVEVQRNGWQSFTIKAGQRYISPGNIHVEGDASSASYFLAAGAIAGGPVRVEGVGRDSIQGDVRFVEALEQMGATVRMGDNWIEAESNGVLRAIDADFNHIPDAAMTIAVAALYADGPSILRNIGSWRVKETDRISAMATELRKLGAIVEEGEDYLKVTPPAEILSAAIDTYDDHRMAMCFSLATLDGAARRGNKERINDPQCVAKTFPEYFEAFAKVTEESLF.

3-phosphoshikimate-binding residues include Lys-26, Ser-27, and Arg-31. Residue Lys-26 participates in phosphoenolpyruvate binding. Phosphoenolpyruvate contacts are provided by Gly-99 and Arg-127. Ser-173, Ser-174, Gln-175, Ser-203, Asp-320, and Lys-347 together coordinate 3-phosphoshikimate. Position 175 (Gln-175) interacts with phosphoenolpyruvate. Catalysis depends on Asp-320, which acts as the Proton acceptor. 3 residues coordinate phosphoenolpyruvate: Arg-351, Arg-393, and Lys-423.

It belongs to the EPSP synthase family. In terms of assembly, monomer.

The protein localises to the cytoplasm. The enzyme catalyses 3-phosphoshikimate + phosphoenolpyruvate = 5-O-(1-carboxyvinyl)-3-phosphoshikimate + phosphate. Its pathway is metabolic intermediate biosynthesis; chorismate biosynthesis; chorismate from D-erythrose 4-phosphate and phosphoenolpyruvate: step 6/7. Functionally, catalyzes the transfer of the enolpyruvyl moiety of phosphoenolpyruvate (PEP) to the 5-hydroxyl of shikimate-3-phosphate (S3P) to produce enolpyruvyl shikimate-3-phosphate and inorganic phosphate. The polypeptide is 3-phosphoshikimate 1-carboxyvinyltransferase (Janthinobacterium sp. (strain Marseille) (Minibacterium massiliensis)).